Here is a 192-residue protein sequence, read N- to C-terminus: UPF0301 protein Bamb_0737 (192 aa).

It belongs to the UPF0301 (AlgH) family.

The chain is UPF0301 protein Bamb_0737 from Burkholderia ambifaria (strain ATCC BAA-244 / DSM 16087 / CCUG 44356 / LMG 19182 / AMMD) (Burkholderia cepacia (strain AMMD)).